A 256-amino-acid chain; its full sequence is Thiazole synthase (256 aa).

Lys-95 serves as the catalytic Schiff-base intermediate with DXP. Residues Gly-156, 182–183, and 204–205 contribute to the 1-deoxy-D-xylulose 5-phosphate site; these read AG and NT.

Belongs to the ThiG family. As to quaternary structure, homotetramer. Forms heterodimers with either ThiH or ThiS.

It is found in the cytoplasm. It carries out the reaction [ThiS sulfur-carrier protein]-C-terminal-Gly-aminoethanethioate + 2-iminoacetate + 1-deoxy-D-xylulose 5-phosphate = [ThiS sulfur-carrier protein]-C-terminal Gly-Gly + 2-[(2R,5Z)-2-carboxy-4-methylthiazol-5(2H)-ylidene]ethyl phosphate + 2 H2O + H(+). Its pathway is cofactor biosynthesis; thiamine diphosphate biosynthesis. Catalyzes the rearrangement of 1-deoxy-D-xylulose 5-phosphate (DXP) to produce the thiazole phosphate moiety of thiamine. Sulfur is provided by the thiocarboxylate moiety of the carrier protein ThiS. In vitro, sulfur can be provided by H(2)S. This Citrobacter koseri (strain ATCC BAA-895 / CDC 4225-83 / SGSC4696) protein is Thiazole synthase.